A 344-amino-acid polypeptide reads, in one-letter code: HTH-type transcriptional repressor MelR (344 aa).

The region spanning 2 to 58 (VRIKDIALKAKVSSATVSRILNEDESLSVAGETRQRVINIAEELGYQTVAKRRKSRG) is the HTH lacI-type domain. Residues 4–23 (IKDIALKAKVSSATVSRILN) constitute a DNA-binding region (H-T-H motif).

It is found in the cytoplasm. Its function is as follows. Represses the melibiose operon melREDCA in the absence of melibiose or raffinose. Binds to two binding sites at the promoter region of the operon. The chain is HTH-type transcriptional repressor MelR from Bacillus subtilis (strain 168).